Consider the following 183-residue polypeptide: MHLLPELASHHAVSIPELLVSRDERQARQHAWLKRHPVPLVSFTVVAPGPIKDSEVTRRIFNHGVTALRALAAKQGWQIQEQAALVSASGPEGMLSIAAPARDLKLATIELEHSHPLGRLWDIDVLTPEGDILSRRDYSLPPRRCLLCEQSAAVCARGKTHQLTDLLNRMEALLNDVDACNVN.

It belongs to the CitX family.

The catalysed reaction is apo-[citrate lyase ACP] + 2'-(5''-triphospho-alpha-D-ribosyl)-3'-dephospho-CoA = holo-[citrate lyase ACP] + diphosphate. Transfers 2-(5''-triphosphoribosyl)-3'-dephosphocoenzyme-A on a serine residue to the apo-acyl carrier protein (gamma chain) of the citrate lyase to yield holo-acyl carrier protein. The chain is Apo-citrate lyase phosphoribosyl-dephospho-CoA transferase from Escherichia coli O6:K15:H31 (strain 536 / UPEC).